Reading from the N-terminus, the 416-residue chain is Glutamyl-tRNA reductase (416 aa).

Residues 46–49 (TCNR), S97, 102–104 (DHE), and Q108 each bind substrate. C47 (nucleophile) is an active-site residue. Position 178–183 (178–183 (GAGMAA)) interacts with NADP(+).

The protein belongs to the glutamyl-tRNA reductase family. As to quaternary structure, homodimer.

The enzyme catalyses (S)-4-amino-5-oxopentanoate + tRNA(Glu) + NADP(+) = L-glutamyl-tRNA(Glu) + NADPH + H(+). It functions in the pathway porphyrin-containing compound metabolism; protoporphyrin-IX biosynthesis; 5-aminolevulinate from L-glutamyl-tRNA(Glu): step 1/2. Functionally, catalyzes the NADPH-dependent reduction of glutamyl-tRNA(Glu) to glutamate 1-semialdehyde (GSA). The polypeptide is Glutamyl-tRNA reductase (Aeropyrum pernix (strain ATCC 700893 / DSM 11879 / JCM 9820 / NBRC 100138 / K1)).